The following is a 713-amino-acid chain: MQPATPLVLCVLLSQVLLLTSAEDLDCTPGFQQKVFHIDQPAEFIEDQAILNLTFSDCKGNDKLHYEVSSPYFRVNTDGSLVALRNITAVGKTLFVHARTPHAEDMAELVIVGGKDIQGSLQDIFKFARTSPVPRQKRSIVVSPILIPENQRQPFPRDVGKVVDSDRPEGSKFRLTGKGVDQEPKGIFRINENTGSVSVTRNLDRETIATYQLFVETVDVNGRTLEGPVPLEVIVIDQNDNRPIFREGPYIGHVMEGSPTGTTVMRMTAFDADDPATDNALLRYNIRQQTPDKPSPNMFYIDPEKGDIVTVVSPALLDRETLENPKYELIIEAQDMAGLDVGLTGTATATIMIDDKNDHSPKFTKKEFQATVEEGAMGVIVNLTVEDKDDPTTGAWRAAYTIINGNPGQSFEIHTNPQTNEGMLSVVKPLDYEISAFHTLLIKVENEDPLVPDVSYGSSSTATVHITVLDANESPVFYPDPMMVTKQENISVGSVLLTVNATDPDSLQRQTIRYSVYKDPAGWLNINPINGTVDTTALLDRESPFVHNSVYTALFLATDSGNPPATGTGTLLITLEDVNDNAPFIYPTVAEVCDDAKNLSVVILGATDKDLHPNTDPFKFEIHKQTVPDKVWKISKINNTHALVSLLQNLNKANYHLPIMVTDSGKPPMTNITDLRVQVCSCKNSKVDCNAAGAPHFSAATALLLSLFSLARL.

The first 22 residues, 1-22, serve as a signal peptide directing secretion; that stretch reads MQPATPLVLCVLLSQVLLLTSA. Residues 23 to 138 constitute a propeptide that is removed on maturation; sequence EDLDCTPGFQ…RTSPVPRQKR (116 aa). N-linked (GlcNAc...) asparagine glycans are attached at residues N52 and N86. Cadherin domains follow at residues 139 to 245, 246 to 363, 364 to 477, 478 to 585, and 584 to 694; these read SIVV…RPIF, REGP…SPKF, TKKE…SPVF, YPDP…APFI, and FIYP…AAGA. A disordered region spans residues 156–178; that stretch reads PRDVGKVVDSDRPEGSKFRLTGK. Residues 158–172 show a composition bias toward basic and acidic residues; sequence DVGKVVDSDRPEGSK. N-linked (GlcNAc...) asparagine glycans are attached at residues N382, N489, N500, N530, N598, N638, and N671. A lipid anchor (GPI-anchor amidated glycine) is attached at G693. The propeptide at 694 to 713 is removed in mature form; the sequence is APHFSAATALLLSLFSLARL.

In terms of assembly, by contrast to classical cadherins, homodimerization in trans is not mediated by cadherin EC1 domain strand-swapping, but instead through a homophilic adhesive interface which joins two elongated EC1-EC2 domains through a region near their Ca2+-binding sites to form a tetrahedral, X-like shape.

It localises to the cell membrane. The protein localises to the cytoplasm. Cadherins are calcium-dependent cell adhesion proteins. They preferentially interact with themselves in a homophilic manner in connecting cells; cadherins may thus contribute to the sorting of heterogeneous cell types. May act as a negative regulator of neural cell growth. This chain is Cadherin-13 (CDH13), found in Bos taurus (Bovine).